The following is a 230-amino-acid chain: 7-cyano-7-deazaguanine synthase (230 aa).

9–19 provides a ligand contact to ATP; sequence LSGGLDSATTA. Zn(2+)-binding residues include cysteine 190, cysteine 198, cysteine 201, and cysteine 204.

The protein belongs to the QueC family. It depends on Zn(2+) as a cofactor.

It carries out the reaction 7-carboxy-7-deazaguanine + NH4(+) + ATP = 7-cyano-7-deazaguanine + ADP + phosphate + H2O + H(+). It participates in purine metabolism; 7-cyano-7-deazaguanine biosynthesis. Catalyzes the ATP-dependent conversion of 7-carboxy-7-deazaguanine (CDG) to 7-cyano-7-deazaguanine (preQ(0)). The sequence is that of 7-cyano-7-deazaguanine synthase from Microcystis aeruginosa (strain NIES-843 / IAM M-2473).